The primary structure comprises 609 residues: Phosphoenolpyruvate carboxykinase [GTP] (609 aa).

Substrate contacts are provided by residues R81 and 220–222 (YGG). Residues K229 and H249 each contribute to the Mn(2+) site. S271 serves as a coordination point for substrate. GTP is bound at residue 272 to 277 (ACGKTN). C273 is a catalytic residue. D296 is a Mn(2+) binding site. Residue 387 to 389 (NSR) participates in substrate binding. GTP contacts are provided by residues R389, R420, and 515–518 (FGEN).

Belongs to the phosphoenolpyruvate carboxykinase [GTP] family. In terms of assembly, monomer. The cofactor is Mn(2+).

It localises to the cytoplasm. The catalysed reaction is oxaloacetate + GTP = phosphoenolpyruvate + GDP + CO2. It functions in the pathway carbohydrate biosynthesis; gluconeogenesis. In terms of biological role, catalyzes the conversion of oxaloacetate (OAA) to phosphoenolpyruvate (PEP), the rate-limiting step in the metabolic pathway that produces glucose from lactate and other precursors derived from the citric acid cycle. The chain is Phosphoenolpyruvate carboxykinase [GTP] from Mycobacterium marinum (strain ATCC BAA-535 / M).